We begin with the raw amino-acid sequence, 877 residues long: Leucine--tRNA ligase (877 aa).

The 'HIGH' region signature appears at 43–53 (PYPSGRIHMGH). The 'KMSKS' region signature appears at 628–632 (KMSKS). Lysine 631 is an ATP binding site.

This sequence belongs to the class-I aminoacyl-tRNA synthetase family.

It is found in the cytoplasm. It carries out the reaction tRNA(Leu) + L-leucine + ATP = L-leucyl-tRNA(Leu) + AMP + diphosphate. This Brucella anthropi (strain ATCC 49188 / DSM 6882 / CCUG 24695 / JCM 21032 / LMG 3331 / NBRC 15819 / NCTC 12168 / Alc 37) (Ochrobactrum anthropi) protein is Leucine--tRNA ligase.